Reading from the N-terminus, the 494-residue chain is Nuclear distribution protein PAC1 (494 aa).

The LisH domain maps to 14-46 (QKNELDKSVLRYLNWNYKQTVRHEHAQDYESVR). The stretch at 90–123 (NSIVRLQKKIIELEQNTETLVSQIKDLNTQVSEL) forms a coiled coil. WD repeat units lie at residues 153 to 192 (NVES…IPLA), 196 to 244 (SHTK…CKFQ), 251 to 292 (GHEH…SLKT), 295 to 334 (PHSQ…SVGT), 347 to 395 (HFIE…LMAH), 415 to 454 (GHLS…HVWE), and 457 to 492 (HTGF…SNVF).

The protein belongs to the WD repeat LIS1/nudF family. In terms of assembly, self-associates. Interacts with NDL1 and dynein.

Its subcellular location is the cytoplasm. The protein localises to the cytoskeleton. It localises to the spindle pole. Functionally, positively regulates the activity of the minus-end directed microtubule motor protein dynein. Plays a central role in positioning the mitotic spindle at the bud neck during cell division. Targets cytoplasmic dynein to microtubule plus ends, thereby promoting dynein-mediated microtubule sliding along the bud cortex and consequently the movement of the mitotic spindle to the bud neck. In Saccharomyces cerevisiae (strain RM11-1a) (Baker's yeast), this protein is Nuclear distribution protein PAC1.